We begin with the raw amino-acid sequence, 117 residues long: Holo-[acyl-carrier-protein] synthase (117 aa).

Residues aspartate 8 and glutamate 57 each coordinate Mg(2+).

The protein belongs to the P-Pant transferase superfamily. AcpS family. The cofactor is Mg(2+).

Its subcellular location is the cytoplasm. It carries out the reaction apo-[ACP] + CoA = holo-[ACP] + adenosine 3',5'-bisphosphate + H(+). Its function is as follows. Transfers the 4'-phosphopantetheine moiety from coenzyme A to a Ser of acyl-carrier-protein. The sequence is that of Holo-[acyl-carrier-protein] synthase from Limosilactobacillus reuteri (Lactobacillus reuteri).